The sequence spans 87 residues: Small ribosomal subunit protein bS18 (87 aa).

Residues 1–10 show a composition bias toward basic and acidic residues; it reads MAGKSSGDRR. The segment at 1–23 is disordered; it reads MAGKSSGDRRKPLRGAKGGKNAA.

It belongs to the bacterial ribosomal protein bS18 family. Part of the 30S ribosomal subunit. Forms a tight heterodimer with protein bS6.

Its function is as follows. Binds as a heterodimer with protein bS6 to the central domain of the 16S rRNA, where it helps stabilize the platform of the 30S subunit. The sequence is that of Small ribosomal subunit protein bS18 from Clavibacter michiganensis subsp. michiganensis (strain NCPPB 382).